The chain runs to 336 residues: Phosphate acyltransferase (336 aa).

It belongs to the PlsX family. In terms of assembly, homodimer. Probably interacts with PlsY.

The protein resides in the cytoplasm. It catalyses the reaction a fatty acyl-[ACP] + phosphate = an acyl phosphate + holo-[ACP]. Its pathway is lipid metabolism; phospholipid metabolism. Functionally, catalyzes the reversible formation of acyl-phosphate (acyl-PO(4)) from acyl-[acyl-carrier-protein] (acyl-ACP). This enzyme utilizes acyl-ACP as fatty acyl donor, but not acyl-CoA. The sequence is that of Phosphate acyltransferase from Pseudomonas fluorescens (strain Pf0-1).